The sequence spans 169 residues: Crossover junction endodeoxyribonuclease RuvC (169 aa).

Active-site residues include D15, E75, and D147. Residues D15, E75, and D147 each coordinate Mg(2+).

The protein belongs to the RuvC family. As to quaternary structure, homodimer which binds Holliday junction (HJ) DNA. The HJ becomes 2-fold symmetrical on binding to RuvC with unstacked arms; it has a different conformation from HJ DNA in complex with RuvA. In the full resolvosome a probable DNA-RuvA(4)-RuvB(12)-RuvC(2) complex forms which resolves the HJ. Mg(2+) is required as a cofactor.

Its subcellular location is the cytoplasm. It catalyses the reaction Endonucleolytic cleavage at a junction such as a reciprocal single-stranded crossover between two homologous DNA duplexes (Holliday junction).. The RuvA-RuvB-RuvC complex processes Holliday junction (HJ) DNA during genetic recombination and DNA repair. Endonuclease that resolves HJ intermediates. Cleaves cruciform DNA by making single-stranded nicks across the HJ at symmetrical positions within the homologous arms, yielding a 5'-phosphate and a 3'-hydroxyl group; requires a central core of homology in the junction. The consensus cleavage sequence is 5'-(A/T)TT(C/G)-3'. Cleavage occurs on the 3'-side of the TT dinucleotide at the point of strand exchange. HJ branch migration catalyzed by RuvA-RuvB allows RuvC to scan DNA until it finds its consensus sequence, where it cleaves and resolves the cruciform DNA. This is Crossover junction endodeoxyribonuclease RuvC from Caulobacter vibrioides (strain ATCC 19089 / CIP 103742 / CB 15) (Caulobacter crescentus).